A 530-amino-acid polypeptide reads, in one-letter code: MNFEQYESAYPPRALPPGAWVTRIGPSPTGKAHIGTALQAVINRSLADGSGGAFLLRIEDTDRERFVEGAIEDLLAALDWLGIRPDESVAHGGAYGPYVQSERLPIYQAAARQLVEVGHAYYCFCTPERLESVRMAQQAAGKPTMYDRHCRNLGREEVEKRLATGEKAVVRLKVPDGTEIAFDDLARGRIAFESQTIDDSVLLKSDGFPTYHLAVVVDDHLMRVNQIIRGEEWIPSTPKHVLLYQYFGWPMPRIAHTPILRDMSRRKLSKRSGDTSITGYRVQGYLPEGLRNFLTRIIWPHPEGKDVYDHEEFVRLFKAEDLPNTGPIVDPQLLDFINGQYLRRLSSAELYTATVEYLKFLLGLHQDIIFETYHPSAPIKQTLTRAELGSFYSAFTANPTYTERVLTLEPERYKRLSDIVVSTGFFFPALFTPADPKLLAKPLGSPEKAGALLGEYLRLYRPDAAQAEWEQSVRELAHEAGVKDGKLFMTLRVAVTGREQTPPLFEVLTILGGDEVQRRLELAAAMPVSL.

Positions 26–36 (PSPTGKAHIGT) match the 'HIGH' region motif. Positions 267–271 (KLSKR) match the 'KMSKS' region motif. Residue lysine 270 coordinates ATP.

The protein belongs to the class-I aminoacyl-tRNA synthetase family. Glutamate--tRNA ligase type 1 subfamily. Monomer.

The protein localises to the cytoplasm. The catalysed reaction is tRNA(Glu) + L-glutamate + ATP = L-glutamyl-tRNA(Glu) + AMP + diphosphate. Its function is as follows. Catalyzes the attachment of glutamate to tRNA(Glu) in a two-step reaction: glutamate is first activated by ATP to form Glu-AMP and then transferred to the acceptor end of tRNA(Glu). The protein is Glutamate--tRNA ligase of Gloeobacter violaceus (strain ATCC 29082 / PCC 7421).